A 292-amino-acid chain; its full sequence is 1D-myo-inositol 2-acetamido-2-deoxy-alpha-D-glucopyranoside deacetylase (292 aa).

Zn(2+) contacts are provided by H12, D15, and H147.

This sequence belongs to the MshB deacetylase family. Zn(2+) serves as cofactor.

It carries out the reaction 1D-myo-inositol 2-acetamido-2-deoxy-alpha-D-glucopyranoside + H2O = 1D-myo-inositol 2-amino-2-deoxy-alpha-D-glucopyranoside + acetate. Catalyzes the deacetylation of 1D-myo-inositol 2-acetamido-2-deoxy-alpha-D-glucopyranoside (GlcNAc-Ins) in the mycothiol biosynthesis pathway. In Rhodococcus jostii (strain RHA1), this protein is 1D-myo-inositol 2-acetamido-2-deoxy-alpha-D-glucopyranoside deacetylase.